The following is a 100-amino-acid chain: Small ribosomal subunit protein uS14c (100 aa).

Belongs to the universal ribosomal protein uS14 family. Part of the 30S ribosomal subunit.

The protein localises to the plastid. It localises to the chloroplast. Its function is as follows. Binds 16S rRNA, required for the assembly of 30S particles. In Physcomitrium patens (Spreading-leaved earth moss), this protein is Small ribosomal subunit protein uS14c.